Here is a 292-residue protein sequence, read N- to C-terminus: uncharacterized protein (292 aa).

The disordered stretch occupies residues 62-81 (ESSSDSDMGFHESQQNQKSN).

This is an uncharacterized protein from Homo sapiens (Human).